The following is a 157-amino-acid chain: Transcriptional repressor NrdR (157 aa).

The segment at 1 to 21 (MKCPNCHKNGSRVVDSRPADN) is disordered. The segment at 3 to 34 (CPNCHKNGSRVVDSRPADNGHAIRRRRECEQC) is a zinc-finger region. The ATP-cone domain maps to 49–139 (LLVIKKNGTR…VYREFKDMHA (91 aa)).

This sequence belongs to the NrdR family. The cofactor is Zn(2+).

In terms of biological role, negatively regulates transcription of bacterial ribonucleotide reductase nrd genes and operons by binding to NrdR-boxes. The chain is Transcriptional repressor NrdR from Ligilactobacillus salivarius (strain UCC118) (Lactobacillus salivarius).